Reading from the N-terminus, the 250-residue chain is Ribosomal RNA small subunit methyltransferase J (250 aa).

Residues 96–97 (RD) and Asp168 contribute to the S-adenosyl-L-methionine site.

Belongs to the methyltransferase superfamily. RsmJ family.

It is found in the cytoplasm. It catalyses the reaction guanosine(1516) in 16S rRNA + S-adenosyl-L-methionine = N(2)-methylguanosine(1516) in 16S rRNA + S-adenosyl-L-homocysteine + H(+). Functionally, specifically methylates the guanosine in position 1516 of 16S rRNA. The sequence is that of Ribosomal RNA small subunit methyltransferase J from Neisseria meningitidis serogroup B (strain ATCC BAA-335 / MC58).